Consider the following 430-residue polypeptide: Glutamate-1-semialdehyde 2,1-aminomutase (430 aa).

Lys-265 is modified (N6-(pyridoxal phosphate)lysine).

It belongs to the class-III pyridoxal-phosphate-dependent aminotransferase family. HemL subfamily. Homodimer. The cofactor is pyridoxal 5'-phosphate.

The protein resides in the cytoplasm. The catalysed reaction is (S)-4-amino-5-oxopentanoate = 5-aminolevulinate. It functions in the pathway porphyrin-containing compound metabolism; protoporphyrin-IX biosynthesis; 5-aminolevulinate from L-glutamyl-tRNA(Glu): step 2/2. The chain is Glutamate-1-semialdehyde 2,1-aminomutase from Shewanella baltica (strain OS223).